Reading from the N-terminus, the 192-residue chain is Fe/S biogenesis protein NfuA (192 aa).

[4Fe-4S] cluster-binding residues include C149 and C152.

Belongs to the NfuA family. Homodimer. Requires [4Fe-4S] cluster as cofactor.

Involved in iron-sulfur cluster biogenesis. Binds a 4Fe-4S cluster, can transfer this cluster to apoproteins, and thereby intervenes in the maturation of Fe/S proteins. Could also act as a scaffold/chaperone for damaged Fe/S proteins. The chain is Fe/S biogenesis protein NfuA from Pseudoalteromonas atlantica (strain T6c / ATCC BAA-1087).